The sequence spans 65 residues: uncharacterized protein (65 aa).

A helical membrane pass occupies residues 37 to 57; it reads ILAIMTSVLPVLLIYIIWIFI.

Its subcellular location is the cell membrane. This is an uncharacterized protein from Bacillus subtilis (strain 168).